The sequence spans 825 residues: Protein SEY1 homolog 2 (825 aa).

The interval 1–21 (MDEVSPTKHFTSKPLLPTKTP) is disordered. Residues 1-728 (MDEVSPTKHF…EKENSEIKYQ (728 aa)) are Cytoplasmic-facing. The region spanning 83–305 (GMDYNAVGIL…FLPQYNKEIP (223 aa)) is the GB1/RHD3-type G domain. 93–100 (GAQSSGKS) contributes to the GTP binding site. A coiled-coil region spans residues 373–397 (KVFTKQIDAALERYKEVTERYMETI). A helical transmembrane segment spans residues 729–749 (IPLYLIVLVVFFGFDEFIAIL). Topologically, residues 750 to 752 (TNP) are lumenal. The chain crosses the membrane as a helical span at residues 753–773 (LLFILTLIIGGGVYIGYKLNL). Over 774 to 825 (GGVAKNYIQYLLSMSLSSTMEYLRTIPFFTPLIDKVWPKDDNNTEETQEEIK) the chain is Cytoplasmic.

This sequence belongs to the TRAFAC class dynamin-like GTPase superfamily. GB1/RHD3 GTPase family. RHD3 subfamily.

It localises to the endoplasmic reticulum membrane. Its function is as follows. Probable GTP-binding protein that may be involved in cell development. The chain is Protein SEY1 homolog 2 from Entamoeba histolytica (strain ATCC 30459 / HM-1:IMSS / ABRM).